The primary structure comprises 656 residues: tRNA(Met) cytidine acetyltransferase TmcA (656 aa).

Residues glutamine 145, 167-176 (GRGKSALLGM), and arginine 291 each bind ATP. Residues 368-542 (SEGKYNRQFF…SGCYSAIALK (175 aa)) enclose the N-acetyltransferase domain. Acetyl-CoA is bound by residues 474-476 (IAV), 481-487 (QQKGIGQ), and glutamate 510.

This sequence belongs to the RNA cytidine acetyltransferase family. TmcA subfamily.

It is found in the cytoplasm. It catalyses the reaction cytidine(34) in elongator tRNA(Met) + acetyl-CoA + ATP + H2O = N(4)-acetylcytidine(34) in elongator tRNA(Met) + ADP + phosphate + CoA + H(+). Its function is as follows. Catalyzes the formation of N(4)-acetylcytidine (ac(4)C) at the wobble position of tRNA(Met), by using acetyl-CoA as an acetyl donor and ATP (or GTP). In Haemophilus influenzae (strain ATCC 51907 / DSM 11121 / KW20 / Rd), this protein is tRNA(Met) cytidine acetyltransferase TmcA.